A 295-amino-acid polypeptide reads, in one-letter code: Proline iminopeptidase (295 aa).

The 245-residue stretch at Thr-35 to Asp-279 folds into the AB hydrolase-1 domain. Ser-107 functions as the Nucleophile in the catalytic mechanism. Asp-246 is a catalytic residue. His-273 (proton donor) is an active-site residue.

The protein belongs to the peptidase S33 family. As to quaternary structure, part of the tricorn proteolytic complex.

The catalysed reaction is Release of N-terminal proline from a peptide.. In terms of biological role, cleaves H-Pro-AMC as well as a wide spectrum of amino acid substrates and several peptide substrates without a proline at the N-terminus. In conjunction with the three factors F1, F2 and F3, Tricorn degrades oligopeptides in a sequential manner, yielding free amino acids. This is Proline iminopeptidase (pip) from Thermoplasma volcanium (strain ATCC 51530 / DSM 4299 / JCM 9571 / NBRC 15438 / GSS1).